The chain runs to 143 residues: EKC/KEOPS complex subunit LAGE3 (143 aa).

The segment at 1 to 57 (MRDADADAGGGADGGDGRGGHSCRGGVDTAAAPAGGAPPAHAPGPGRDAASAARGSR) is disordered. Low complexity predominate over residues 30–55 (AAAPAGGAPPAHAPGPGRDAASAARG).

The protein belongs to the CTAG/PCC1 family. Component of the EKC/KEOPS complex composed of at least GON7, TP53RK, TPRKB, OSGEP and LAGE3; the whole complex dimerizes. In terms of tissue distribution, ubiquitous.

The protein resides in the cytoplasm. It localises to the nucleus. Its function is as follows. Component of the EKC/KEOPS complex that is required for the formation of a threonylcarbamoyl group on adenosine at position 37 (t(6)A37) in tRNAs that read codons beginning with adenine. The complex is probably involved in the transfer of the threonylcarbamoyl moiety of threonylcarbamoyl-AMP (TC-AMP) to the N6 group of A37. LAGE3 functions as a dimerization module for the complex. This chain is EKC/KEOPS complex subunit LAGE3, found in Homo sapiens (Human).